The chain runs to 319 residues: F-box only protein 8 (319 aa).

The region spanning 68–111 (FINLEMLPPELSFTILSYLNATDLCLASCVWQDLANDELLWQGL) is the F-box domain. An SEC7 domain is found at 146 to 276 (FNANPDEGVN…LILLSIDLTS (131 aa)).

Functionally, may promote guanine-nucleotide exchange on an ARF. Promotes the activation of ARF through replacement of GDP with GTP (Potential). In Bos taurus (Bovine), this protein is F-box only protein 8 (FBXO8).